A 170-amino-acid polypeptide reads, in one-letter code: Siroheme decarboxylase NirL subunit (170 aa).

This sequence belongs to the Ahb/Nir family. Probably forms a complex composed of NirD, NirL, NirG and NirH. All proteins are required for the total conversion of siroheme to didecarboxysiroheme.

It carries out the reaction siroheme + 2 H(+) = 12,18-didecarboxysiroheme + 2 CO2. The protein operates within porphyrin-containing compound metabolism. Its function is as follows. Involved in heme d1 biosynthesis. Catalyzes the decarboxylation of siroheme into didecarboxysiroheme. This chain is Siroheme decarboxylase NirL subunit, found in Stutzerimonas stutzeri (Pseudomonas stutzeri).